The sequence spans 611 residues: tRNA uridine 5-carboxymethylaminomethyl modification enzyme MnmG (611 aa).

Residue 14 to 19 (GAGHAG) participates in FAD binding. NAD(+) is bound at residue 274–288 (GPRYCPSIEDKIVKF).

This sequence belongs to the MnmG family. In terms of assembly, homodimer. Heterotetramer of two MnmE and two MnmG subunits. Requires FAD as cofactor.

It localises to the cytoplasm. Functionally, NAD-binding protein involved in the addition of a carboxymethylaminomethyl (cmnm) group at the wobble position (U34) of certain tRNAs, forming tRNA-cmnm(5)s(2)U34. This chain is tRNA uridine 5-carboxymethylaminomethyl modification enzyme MnmG, found in Chlamydia caviae (strain ATCC VR-813 / DSM 19441 / 03DC25 / GPIC) (Chlamydophila caviae).